Reading from the N-terminus, the 923-residue chain is Isoleucine--tRNA ligase (923 aa).

A 'HIGH' region motif is present at residues 57-67; that stretch reads PYANGHIHIGH. Position 560 (glutamate 560) interacts with L-isoleucyl-5'-AMP. Residues 601–605 carry the 'KMSKS' region motif; it reads KMSKS. Residue lysine 604 coordinates ATP. Residues cysteine 895, cysteine 898, cysteine 915, and cysteine 918 each coordinate Zn(2+).

Belongs to the class-I aminoacyl-tRNA synthetase family. IleS type 1 subfamily. As to quaternary structure, monomer. The cofactor is Zn(2+).

It is found in the cytoplasm. The catalysed reaction is tRNA(Ile) + L-isoleucine + ATP = L-isoleucyl-tRNA(Ile) + AMP + diphosphate. Functionally, catalyzes the attachment of isoleucine to tRNA(Ile). As IleRS can inadvertently accommodate and process structurally similar amino acids such as valine, to avoid such errors it has two additional distinct tRNA(Ile)-dependent editing activities. One activity is designated as 'pretransfer' editing and involves the hydrolysis of activated Val-AMP. The other activity is designated 'posttransfer' editing and involves deacylation of mischarged Val-tRNA(Ile). This is Isoleucine--tRNA ligase from Geobacter sulfurreducens (strain ATCC 51573 / DSM 12127 / PCA).